We begin with the raw amino-acid sequence, 1004 residues long: UPF0182 protein Noca_1530 (1004 aa).

Positions 1–20 (MSELFDEAPRDPGPPARSGS) are disordered. A run of 7 helical transmembrane segments spans residues 26–46 (LIVT…FAGI), 71–91 (VLFF…IYLA), 120–140 (TWLL…SAIG), 183–203 (MAVL…YGGI), 212–232 (LSGA…LAKA), 261–281 (VLPA…LFFV), and 293–313 (VGLA…PGIV). 2 disordered regions span residues 899 to 924 (GVST…PPAT) and 974 to 1004 (LGQK…SPSS). Low complexity-rich tracts occupy residues 903-916 (GPGT…QPGD) and 979-1004 (GSAG…SPSS).

This sequence belongs to the UPF0182 family.

The protein localises to the cell membrane. The chain is UPF0182 protein Noca_1530 from Nocardioides sp. (strain ATCC BAA-499 / JS614).